The primary structure comprises 400 residues: NADH-quinone oxidoreductase subunit D (400 aa).

It belongs to the complex I 49 kDa subunit family. As to quaternary structure, NDH-1 is composed of 14 different subunits. Subunits NuoB, C, D, E, F, and G constitute the peripheral sector of the complex.

Its subcellular location is the cell inner membrane. The enzyme catalyses a quinone + NADH + 5 H(+)(in) = a quinol + NAD(+) + 4 H(+)(out). NDH-1 shuttles electrons from NADH, via FMN and iron-sulfur (Fe-S) centers, to quinones in the respiratory chain. The immediate electron acceptor for the enzyme in this species is believed to be a menaquinone. Couples the redox reaction to proton translocation (for every two electrons transferred, four hydrogen ions are translocated across the cytoplasmic membrane), and thus conserves the redox energy in a proton gradient. The chain is NADH-quinone oxidoreductase subunit D from Chlorobium chlorochromatii (strain CaD3).